Here is a 69-residue protein sequence, read N- to C-terminus: uncharacterized protein (69 aa).

This is an uncharacterized protein from Mycobacterium tuberculosis (strain ATCC 25618 / H37Rv).